The chain runs to 282 residues: Elongation factor Ts (282 aa).

Residues 80-83 (TDFV) form an involved in Mg(2+) ion dislocation from EF-Tu region.

The protein belongs to the EF-Ts family.

The protein resides in the cytoplasm. Functionally, associates with the EF-Tu.GDP complex and induces the exchange of GDP to GTP. It remains bound to the aminoacyl-tRNA.EF-Tu.GTP complex up to the GTP hydrolysis stage on the ribosome. The polypeptide is Elongation factor Ts (Chlamydia trachomatis serovar L2b (strain UCH-1/proctitis)).